Here is a 412-residue protein sequence, read N- to C-terminus: Peptidase T (412 aa).

Histidine 81 contacts Zn(2+). The active site involves aspartate 83. Aspartate 144 contacts Zn(2+). The active-site Proton acceptor is the glutamate 178. The Zn(2+) site is built by glutamate 179, aspartate 201, and histidine 383.

This sequence belongs to the peptidase M20B family. The cofactor is Zn(2+).

The protein localises to the cytoplasm. It carries out the reaction Release of the N-terminal residue from a tripeptide.. Functionally, cleaves the N-terminal amino acid of tripeptides. The sequence is that of Peptidase T from Bacillus cereus (strain Q1).